A 2126-amino-acid chain; its full sequence is Phthioceranic/hydroxyphthioceranic acid synthase (2126 aa).

The Ketosynthase family 3 (KS3) domain maps to 24 to 447 (VTPVAVIGMA…GTNVHAVVEQ (424 aa)). Cys-196 acts as the Acyl-thioester intermediate; for beta-ketoacyl synthase activity in catalysis. Residues His-331 and His-367 each act as for beta-ketoacyl synthase activity in the active site. The segment at 449-549 (PQTEAQPHAA…VYQPAVGQDD (101 aa)) is linker domain (LD). The segment at 550–849 (RGPVWLFSGQ…VAALAGMRRE (300 aa)) is acyltransferase (AT). Ser-641 functions as the Acyl-ester intermediate; for acyltransferase activity in the catalytic mechanism. The interval 909–1191 (STVAVHPLLG…LAVCGLRIGT (283 aa)) is dehydratase (DH). The tract at residues 914 to 1032 (HPLLGAHVRL…RRASAVLQQV (119 aa)) is N-terminal hotdog fold. The PKS/mFAS DH domain maps to 914–1198 (HPLLGAHVRL…IGTGVSERDK (285 aa)). His-947 functions as the Proton acceptor; for dehydratase activity in the catalytic mechanism. The tract at residues 1051 to 1198 (PCRVDGEDLR…IGTGVSERDK (148 aa)) is C-terminal hotdog fold. Asp-1115 (proton donor; for dehydratase activity) is an active-site residue. A pseudo beta-ketoacyl reductase (PsiKR) region spans residues 1227 to 1398 (KWLLISDCAA…SEEDETAWRD (172 aa)). An enoylreductase (ER) region spans residues 1426–1750 (SGMRLQIRTP…EHTGKLVLHI (325 aa)). The tract at residues 1772 to 2019 (GSYIITGGLG…AERSRFFEVF (248 aa)) is beta-ketoacyl reductase (KR). Residues 1780-1783 (LGGL), 1803-1806 (SRTQ), 1831-1832 (DI), and 1904-1905 (FS) each bind NADP(+). The region spanning 2040–2126 (DEWPARLRQL…DAPAAALSSQ (87 aa)) is the Carrier domain. The residue at position 2075 (Ser-2075) is an O-(pantetheine 4'-phosphoryl)serine.

Pantetheine 4'-phosphate is required as a cofactor.

It catalyses the reaction hexadecanoyl-[(hydroxy)phthioceranic acid synthase] + 7 (S)-methylmalonyl-CoA + 14 NADPH + 21 H(+) = C37-phthioceranyl-[(hydroxy)phthioceranic acid synthase] + 7 CO2 + 14 NADP(+) + 7 CoA + 7 H2O. The catalysed reaction is hexadecanoyl-[(hydroxy)phthioceranic acid synthase] + 8 (S)-methylmalonyl-CoA + 16 NADPH + 24 H(+) = C40-phthioceranyl-[(hydroxy)phthioceranic acid synthase] + 8 CO2 + 16 NADP(+) + 8 CoA + 8 H2O. This chain is Phthioceranic/hydroxyphthioceranic acid synthase (pks2), found in Mycobacterium bovis (strain BCG / Pasteur 1173P2).